We begin with the raw amino-acid sequence, 353 residues long: 3-dehydroquinate synthase (353 aa).

NAD(+)-binding positions include 62–67, 96–100, 120–121, Lys133, and Lys142; these read DGEQYK, GVIGD, and TT. Residues Glu175, His236, and His253 each contribute to the Zn(2+) site.

Belongs to the sugar phosphate cyclases superfamily. Dehydroquinate synthase family. Requires NAD(+) as cofactor. The cofactor is Co(2+). Zn(2+) serves as cofactor.

It localises to the cytoplasm. It catalyses the reaction 7-phospho-2-dehydro-3-deoxy-D-arabino-heptonate = 3-dehydroquinate + phosphate. It functions in the pathway metabolic intermediate biosynthesis; chorismate biosynthesis; chorismate from D-erythrose 4-phosphate and phosphoenolpyruvate: step 2/7. In terms of biological role, catalyzes the conversion of 3-deoxy-D-arabino-heptulosonate 7-phosphate (DAHP) to dehydroquinate (DHQ). The sequence is that of 3-dehydroquinate synthase from Helicobacter hepaticus (strain ATCC 51449 / 3B1).